A 132-amino-acid polypeptide reads, in one-letter code: Salivary protein 15 Iper-2 (132 aa).

The N-terminal stretch at 1–18 (MKVVCIIVLFVIVAVNES) is a signal peptide. Residues N24, N36, N62, N89, and N101 are each glycosylated (N-linked (GlcNAc...) asparagine). The interval 113-132 (GPNGQTCADKSQCVGHIPGC) is CD4-binding.

This sequence belongs to the salp15 family. Interacts with host CD4. Interacts with host DC-SIGN (CD209). In terms of assembly, (Microbial infection) Interacts with Borrelia outer surface protein C (OspC). In terms of tissue distribution, expressed in salivary glands from feeding female ticks. Highly expressed 1 day after start of feeding, and weakly expressed at the initiation of feeding and 4 days after start of feeding.

Its subcellular location is the secreted. In terms of biological role, salivary tick protein that downregulates host immune system by binding to both dendritic cells, and CD4(+) T cells. Specifically binds to the CD4 coreceptor on T cells. This interaction prevents the activation of the Src kinase, Lck, and its downstream substrate Zap-70, and results in deficient activation of PLCgamma1, the repression of calcium fluxes triggered by T-cell antigen receptor (TCR) ligation, and a subsequent reduction in interleukin-2 production. This salivary protein also binds to DC-SIGN (CD209) on dendritic cells (DC) and activates the Raf-1 kinase/MEK signaling pathway that results in down-regulating expression of pro-inflammatory cytokines. Furthermore, it inhibits T cell proliferation induced by DCs. It also inhibits in vitro keratinocyte inflammation induced by Borrelia burgdorferi or by the major outer surface protein (OspC) of Borrelia. In addition, it downregulates chemokines and monocyte chemoattractant protein 1, as well as several antimicrobial peptides such as defensins, cathelicidin, psoriasin, and RNase 7. Apart from its immunomodulatory activities, it is also associated with protection of Borrelia spirochetes from antibody-mediated killing through its binding to OspC. In vivo, tests on different immune disease animal models show promising therapeutic results, e.g., in inhibiting HIV infection, experimental autoimmune encephalomyelitis, transplantation rejection, and asthma. (Microbial infection) Protects Borrelia garinii from anti-Borrelia antibody-mediated cytotoxicity in vitro. May facilitate B.garinii transmission in mouse model. Its function is as follows. (Microbial infection) Protects Borrelia burgdorferi from anti-Borrelia antibody-mediated cytotoxicity in vitro. Functionally, (Microbial infection) Protects Borrelia afzelii from anti-Borrelia antibody-mediated cytotoxicity in vitro. This Ixodes persulcatus (Taiga tick) protein is Salivary protein 15 Iper-2.